The following is a 98-amino-acid chain: NADH-ubiquinone oxidoreductase chain 4L (98 aa).

Transmembrane regions (helical) follow at residues 1-21 (MTLI…GLLM), 29-49 (ALLC…LTIL), and 61-81 (IILL…LVMV).

It belongs to the complex I subunit 4L family. As to quaternary structure, core subunit of respiratory chain NADH dehydrogenase (Complex I) which is composed of 45 different subunits.

It is found in the mitochondrion inner membrane. The catalysed reaction is a ubiquinone + NADH + 5 H(+)(in) = a ubiquinol + NAD(+) + 4 H(+)(out). In terms of biological role, core subunit of the mitochondrial membrane respiratory chain NADH dehydrogenase (Complex I) which catalyzes electron transfer from NADH through the respiratory chain, using ubiquinone as an electron acceptor. Part of the enzyme membrane arm which is embedded in the lipid bilayer and involved in proton translocation. This is NADH-ubiquinone oxidoreductase chain 4L (MT-ND4L) from Balaenoptera physalus (Fin whale).